The following is a 275-amino-acid chain: UBX domain-containing protein 8 (275 aa).

Position 1 (Met-1) is a topological domain, cytoplasmic. A helical transmembrane segment spans residues 2–22; that stretch reads ASRGVVGIFLLSALPLLCLEL. Topologically, residues 23–33 are lumenal; the sequence is RRGKPDLGIKD. Residues 34–54 traverse the membrane as a helical segment; the sequence is LILLCGRIFLLLALLTLIISV. The Cytoplasmic segment spans residues 55-275; it reads TTSWVNSFKP…LNVEEKEQSS (221 aa). The interval 137–181 is disordered; sequence DEDLELDSESQTSFETSNREAAKRRNLPNSVTNISPPAEQPTKKE. Positions 192–268 constitute a UBX domain; that stretch reads TAEEVVTVAL…GITVDTVLNV (77 aa).

In terms of assembly, interacts with SYVN1 and VCP.

Its subcellular location is the endoplasmic reticulum membrane. Functionally, involved in endoplasmic reticulum-associated degradation (ERAD) for misfolded lumenal proteins, possibly by tethering VCP to the endoplasmic reticulum membrane. May play a role in reproduction. May play a role in reproduction. The sequence is that of UBX domain-containing protein 8 (UBXN8) from Bos taurus (Bovine).